The chain runs to 471 residues: Thymidine phosphorylase (471 aa).

Residues 1 to 10 show a composition bias toward pro residues; it reads MAAPGTPPPS. The tract at residues 1 to 21 is disordered; that stretch reads MAAPGTPPPSASGGGGGEPRQ. Thr-6 carries the post-translational modification Phosphothreonine. Substrate is bound by residues His-102, Arg-188, Ser-203, and Lys-207.

This sequence belongs to the thymidine/pyrimidine-nucleoside phosphorylase family. In terms of assembly, homodimer.

The enzyme catalyses thymidine + phosphate = 2-deoxy-alpha-D-ribose 1-phosphate + thymine. It functions in the pathway pyrimidine metabolism; dTMP biosynthesis via salvage pathway; dTMP from thymine: step 1/2. In terms of biological role, catalyzes the reversible phosphorolysis of thymidine. The produced molecules are then utilized as carbon and energy sources or in the rescue of pyrimidine bases for nucleotide synthesis. The polypeptide is Thymidine phosphorylase (Tymp) (Mus musculus (Mouse)).